The chain runs to 552 residues: Membrane protein insertase YidC (552 aa).

The chain crosses the membrane as a helical span at residues 3–23 (IKRTVLWVIFFMSAVMLFDNW). The segment at 36–59 (SATPTRTVGSAAPGTTTPGTQPAD) is disordered. Residues 42-59 (TVGSAAPGTTTPGTQPAD) are compositionally biased toward low complexity. A run of 3 helical transmembrane segments spans residues 364–384 (WGWS…PLSA), 430–450 (FGGC…YWVL), and 504–524 (MMFM…GLVL).

Belongs to the OXA1/ALB3/YidC family. Type 1 subfamily. Interacts with the Sec translocase complex via SecD. Specifically interacts with transmembrane segments of nascent integral membrane proteins during membrane integration.

The protein resides in the cell inner membrane. Functionally, required for the insertion and/or proper folding and/or complex formation of integral membrane proteins into the membrane. Involved in integration of membrane proteins that insert both dependently and independently of the Sec translocase complex, as well as at least some lipoproteins. Aids folding of multispanning membrane proteins. The polypeptide is Membrane protein insertase YidC (Paraburkholderia xenovorans (strain LB400)).